We begin with the raw amino-acid sequence, 142 residues long: Large ribosomal subunit protein uL13 (142 aa).

The protein belongs to the universal ribosomal protein uL13 family. In terms of assembly, part of the 50S ribosomal subunit.

Functionally, this protein is one of the early assembly proteins of the 50S ribosomal subunit, although it is not seen to bind rRNA by itself. It is important during the early stages of 50S assembly. This Shewanella denitrificans (strain OS217 / ATCC BAA-1090 / DSM 15013) protein is Large ribosomal subunit protein uL13.